Here is a 130-residue protein sequence, read N- to C-terminus: DNA-directed RNA polymerase subunit omega (130 aa).

Residues 108-130 form a disordered region; sequence TEEELLKGLEGLAPPEEQPEEDE.

The protein belongs to the RNA polymerase subunit omega family. In terms of assembly, the RNAP catalytic core consists of 2 alpha, 1 beta, 1 beta' and 1 omega subunit. When a sigma factor is associated with the core the holoenzyme is formed, which can initiate transcription.

It carries out the reaction RNA(n) + a ribonucleoside 5'-triphosphate = RNA(n+1) + diphosphate. Promotes RNA polymerase assembly. Latches the N- and C-terminal regions of the beta' subunit thereby facilitating its interaction with the beta and alpha subunits. This is DNA-directed RNA polymerase subunit omega from Rhodopseudomonas palustris (strain ATCC BAA-98 / CGA009).